A 552-amino-acid chain; its full sequence is Chaperonin GroEL (552 aa).

Residues 30-33, Lys-51, 87-91, Gly-415, 480-482, and Asp-496 each bind ATP; these read TLGP, DGTTT, and NAA.

This sequence belongs to the chaperonin (HSP60) family. Forms a cylinder of 14 subunits composed of two heptameric rings stacked back-to-back. Interacts with the co-chaperonin GroES.

It localises to the cytoplasm. The enzyme catalyses ATP + H2O + a folded polypeptide = ADP + phosphate + an unfolded polypeptide.. Its function is as follows. Together with its co-chaperonin GroES, plays an essential role in assisting protein folding. The GroEL-GroES system forms a nano-cage that allows encapsulation of the non-native substrate proteins and provides a physical environment optimized to promote and accelerate protein folding. In Coxiella burnetii (strain RSA 331 / Henzerling II), this protein is Chaperonin GroEL.